The sequence spans 542 residues: Protein XP55 (542 aa).

An N-terminal signal peptide occupies residues 1–33 (MTARRTRWTRRTDRSLPIRSAAAAVAFAAGATA). The N-palmitoyl cysteine moiety is linked to residue C34. The S-diacylglycerol cysteine moiety is linked to residue C34. The disordered stretch occupies residues 519 to 542 (LEGRTNTASPAGPGGTSRTGGRKK).

Belongs to the bacterial solute-binding protein 5 family.

The protein localises to the cell membrane. Required for transport of an unidentified substrate. The sequence is that of Protein XP55 (xp55) from Streptomyces lividans.